Consider the following 85-residue polypeptide: Conotoxin Lt28.3 (85 aa).

The N-terminal stretch at 1 to 21 is a signal peptide; sequence MPKLEMMLLVLLILPLCYIDA. A propeptide spanning residues 22 to 40 is cleaved from the precursor; sequence VGPLPPWNMEDEIIEHWQK.

This sequence belongs to the conotoxin D superfamily. In terms of processing, contains 5 disulfide bonds. As to expression, expressed by the venom duct.

It localises to the secreted. Its function is as follows. Probable neurotoxin. The polypeptide is Conotoxin Lt28.3 (Conus litteratus (Lettered cone)).